Reading from the N-terminus, the 30-residue chain is Cycloviolacin-O5 (30 aa).

Positions 1–30 (GTPCGESCVWIPCISSAVGCSCKNKVCYKN) form a cross-link, cyclopeptide (Gly-Asn). 3 disulfide bridges follow: Cys4/Cys20, Cys8/Cys22, and Cys13/Cys27.

In terms of processing, this is a cyclic peptide.

In terms of biological role, probably participates in a plant defense mechanism. This is Cycloviolacin-O5 from Viola odorata (Sweet violet).